Here is an 86-residue protein sequence, read N- to C-terminus: Putative membrane protein insertion efficiency factor (86 aa).

Positions 66–86 are disordered; it reads FSKGGFDPVPPHDGVPGKKED.

The protein belongs to the UPF0161 family.

It localises to the cell inner membrane. Functionally, could be involved in insertion of integral membrane proteins into the membrane. This is Putative membrane protein insertion efficiency factor from Chlorobium luteolum (strain DSM 273 / BCRC 81028 / 2530) (Pelodictyon luteolum).